A 544-amino-acid polypeptide reads, in one-letter code: GDP-mannose 4,6-dehydratase sdnI (544 aa).

Residues Gly16 to Asp21, Arg41, Asp64 to Met65, and Leu86 to Ser90 each bind NADP(+). Residue Ser90 coordinates substrate. Catalysis depends on nucleophile residues Glu135 and Tyr157. Tyr157 lines the substrate pocket. Lys161 lines the NADP(+) pocket. Asn186 contacts substrate. Residues His187 and Arg192 each contribute to the NADP(+) site. Substrate-binding positions include Arg192–Lys200, Gly219, Arg225, and Arg303–Glu306. The tract at residues Gly366–Val406 is disordered. 2 stretches are compositionally biased toward polar residues: residues Thr368 to Gly381 and Gly389 to Ser404.

The protein belongs to the NAD(P)-dependent epimerase/dehydratase family. GDP-mannose 4,6-dehydratase subfamily. NADP(+) is required as a cofactor.

It catalyses the reaction GDP-alpha-D-mannose = GDP-4-dehydro-alpha-D-rhamnose + H2O. It functions in the pathway antibiotic biosynthesis. Functionally, GDP-mannose 4,6-dehydratase; part of the gene cluster that mediates the biosynthesis of sordarin and hypoxysordarin, glycoside antibiotics with a unique tetracyclic diterpene aglycone structure. First, the geranylgeranyl diphosphate synthase sdnC constructs GGDP from farnesyl diphosphate and isopentenyl diphosphate. The diterpene cyclase sdnA then catalyzes the cyclization of GGDP to afford cycloaraneosene. Cycloaraneosene is then hydroxylated four times by the putative cytochrome P450 monooxygenases sdnB, sdnE, sdnF and sdnH to give a hydroxylated cycloaraneosene derivative such as cycloaraneosene-8,9,13,19-tetraol. Although the order of the hydroxylations is unclear, at least C8, C9 and C13 of the cycloaraneosene skeleton are hydroxylated before the sordaricin formation. Dehydration of the 13-hydroxy group of the hydroxylated cycloaraneosene derivative might be catalyzed by an unassigned hypothetical protein such as sdnG and sdnP to construct the cyclopentadiene moiety. The FAD-dependent oxidoreductase sdnN is proposed to catalyze the oxidation at C9 of the hydroxylated cycloaraneosene derivative and also catalyze the Baeyer-Villiger oxidation to give the lactone intermediate. The presumed lactone intermediate would be hydrolyzed to give an acrolein moiety and a carboxylate moiety. Then, [4+2]cycloaddition would occur between the acrolein moiety and the cyclopentadiene moiety to give sordaricin. SdnN might also be involved in the [4+2]cycloaddition after the hypothesized oxidation to accommodate the oxidized product and prompt the [4+2]cycloaddition. GDP-6-deoxy-D-altrose may be biosynthesized from GDP-D-mannose by the putative GDP-mannose-4,6-dehydratase sdnI and the short-chain dehydrogenase sdnK. The glycosyltransferase sdnJ catalyzes the attachment of 6-deoxy-D-altrose onto the 19-hydroxy group of sordaricin to give 4'-O-demethylsordarin. The methyltransferase sdnD would complete the biosynthesis of sordarin. Sordarin can be further modified into hypoxysordarin. The unique acyl chain at the 3'-hydroxy group of hypoxysordarin would be constructed by an iterative type I PKS sdnO and the trans-acting polyketide methyltransferase sdnL. SdnL would be responsible for the introduction of an alpha-methyl group of the polyketide chain. Alternatively, the beta-lactamase-like protein sdnR might be responsible for the cleavage and transfer of the polyketide chain from the PKS sdnO to sordarin. Two putative cytochrome P450 monooxygenases, sdnQ and sdnT, might catalyze the epoxidations of the polyketide chain to complete the biosynthesis of hypoxysordarin. Transcriptional regulators sdnM and sdnS are presumably encoded for the transcriptional regulation of the expression of the sdn gene cluster. This chain is GDP-mannose 4,6-dehydratase sdnI, found in Sordaria araneosa (Pleurage araneosa).